We begin with the raw amino-acid sequence, 327 residues long: Arabinose 5-phosphate isomerase KdsD (327 aa).

The SIS domain maps to I41 to F183. Substrate contacts are provided by residues G74 to T75, H81, H87, G113 to D122, H147 to D149, T221, and E273. Residue H81 coordinates Zn(2+). One can recognise a CBS 1 domain in the interval M209 to Q268. One can recognise a CBS 2 domain in the interval M275–R327.

The protein belongs to the SIS family. GutQ/KpsF subfamily. Homotetramer.

The enzyme catalyses D-arabinose 5-phosphate = D-ribulose 5-phosphate. It participates in carbohydrate biosynthesis; 3-deoxy-D-manno-octulosonate biosynthesis; 3-deoxy-D-manno-octulosonate from D-ribulose 5-phosphate: step 1/3. It functions in the pathway bacterial outer membrane biogenesis; lipopolysaccharide biosynthesis. Inhibited by hydroxamates, mimicking the putative enediol reaction intermediate. Most potent inhibition, with an IC(50) of 0.7 uM, is obtained with the 4 carbon-based hydroxamate containing acetyl moieties. Involved in the biosynthesis of 3-deoxy-D-manno-octulosonate (KDO), a unique 8-carbon sugar component of lipopolysaccharides (LPSs). Catalyzes the reversible aldol-ketol isomerization between D-ribulose 5-phosphate (Ru5P) and D-arabinose 5-phosphate (A5P). The chain is Arabinose 5-phosphate isomerase KdsD (kdsD) from Francisella tularensis subsp. tularensis (strain SCHU S4 / Schu 4).